Consider the following 696-residue polypeptide: UvrABC system protein B (696 aa).

In terms of domain architecture, Helicase ATP-binding spans 45–434; sequence EGIGDGLSYQ…DEVVEQVVRP (390 aa). Residue 58-65 participates in ATP binding; sequence GVTGSGKT. Positions 111–134 match the Beta-hairpin motif; it reads YYDYYQPEAYVPQRDLFIEKDSSV. Residues 450–616 form the Helicase C-terminal domain; it reads QVDDLLSEIH…GVVKRIKDII (167 aa). Residues 647–682 form the UVR domain; sequence GKEIKRLEKQMLDHAKNLEFEKAAAVRDQLAKLKSQ.

This sequence belongs to the UvrB family. In terms of assembly, forms a heterotetramer with UvrA during the search for lesions. Interacts with UvrC in an incision complex.

The protein resides in the cytoplasm. Its function is as follows. The UvrABC repair system catalyzes the recognition and processing of DNA lesions. A damage recognition complex composed of 2 UvrA and 2 UvrB subunits scans DNA for abnormalities. Upon binding of the UvrA(2)B(2) complex to a putative damaged site, the DNA wraps around one UvrB monomer. DNA wrap is dependent on ATP binding by UvrB and probably causes local melting of the DNA helix, facilitating insertion of UvrB beta-hairpin between the DNA strands. Then UvrB probes one DNA strand for the presence of a lesion. If a lesion is found the UvrA subunits dissociate and the UvrB-DNA preincision complex is formed. This complex is subsequently bound by UvrC and the second UvrB is released. If no lesion is found, the DNA wraps around the other UvrB subunit that will check the other stand for damage. This Ralstonia nicotianae (strain ATCC BAA-1114 / GMI1000) (Ralstonia solanacearum) protein is UvrABC system protein B.